The sequence spans 127 residues: Serum amyloid A protein (127 aa).

An N-terminal signal peptide occupies residues 1–18; it reads MKLLTSLFLLSLVLCVNS. Residue Gln-19 is modified to Pyrrolidone carboxylic acid. The interval 89–127 is disordered; that stretch reads GGSSGRGVEDSMADQEANRWGRSGKDPNRYRPKGLDPKY. Positions 104–127 are enriched in basic and acidic residues; the sequence is EANRWGRSGKDPNRYRPKGLDPKY.

It belongs to the SAA family. In terms of tissue distribution, expressed by the liver; secreted in plasma.

The protein resides in the secreted. Functionally, major acute phase reactant. Apolipoprotein of the HDL complex. The sequence is that of Serum amyloid A protein (SAA1) from Notamacropus eugenii (Tammar wallaby).